The sequence spans 468 residues: uncharacterized protein (468 aa).

An HTH gntR-type domain is found at 1–69 (MKKYQQLAEQ…PQSGYYVAPQ (69 aa)). Residue K312 is modified to N6-(pyridoxal phosphate)lysine.

In the C-terminal section; belongs to the class-I pyridoxal-phosphate-dependent aminotransferase family.

This is an uncharacterized protein from Escherichia coli (strain K12).